A 419-amino-acid chain; its full sequence is MLGILTFILVFGIIVVVHEFGHFYFAKKSGILVREFAIGMGPKIFAHIGKDGTAYTIRILPLGGYVRMAGWGDDTTEIKTGTPVSLTLADDGKVKRINLSGKKLDQTALPMQVTQFDFEDKLFIKGLVLEEEKTFAVDHDATVVEADGTEVRIAPLDVQYQNATIWGKLITNFAGPMNNFILGVVVFWVLIFMQGGVRDVDTNQFHIMPQGALAKVGVPETAQITKIGSHEVSNWESLIQAVETETKDKTAPTLDVTISEKGSDKQVTVTPEDSQGRYLLGVQPGVKSDFLSMFVGGFTTAADSALRILSALKNLIFQPDLNKLGGPVAIFKASSDAAKNGIENILYFLAMISINIGIFNLIPIPALDGGKIVLNILEAIRRKPLKQEIETYVTLAGVVIMVVLMIAVTWNDIMRLFFR.

H18 is a binding site for Zn(2+). E19 is a catalytic residue. Residue H22 coordinates Zn(2+). Transmembrane regions (helical) follow at residues 169–191 (LITN…WVLI), 345–367 (ILYF…IPAL), and 388–410 (EIET…AVTW).

This sequence belongs to the peptidase M50B family. The cofactor is Zn(2+).

It is found in the cell membrane. This Streptococcus pneumoniae (strain ATCC BAA-255 / R6) protein is Putative zinc metalloprotease spr0242.